A 536-amino-acid chain; its full sequence is Zinc finger CCCH domain-containing protein 18 (536 aa).

The C3H1-type zinc-finger motif lies at 156–183 (EFPVKICHYFNKGFCKHGNNCRYFHGQI). The HTH OST-type domain maps to 211 to 294 (SLEKLEGEII…HGQHSVILAE (84 aa)). The RRM domain maps to 317 to 392 (RQIYLTFPAE…ARVLVKPYRE (76 aa)).

Possesses ribonuclease activity in vitro. In Arabidopsis thaliana (Mouse-ear cress), this protein is Zinc finger CCCH domain-containing protein 18.